Consider the following 501-residue polypeptide: Type B diterpene cyclase (501 aa).

Belongs to the terpene synthase family. In terms of assembly, monomer. The cofactor is Mg(2+).

The catalysed reaction is geranylgeranyl diphosphate = tuberculosinyl diphosphate. Strongly inhibited by 15-aza-dihydrogeranylgeraniol and 5-isopropyl-N,N,N,2-tetramethyl-4-(piperidine-1-carbonyloxy)benzenaminium chloride (Amo-1618). Inhibited by GGPP concentrations higher than 50 uM. Catalyzes the formation of tuberculosinyl diphosphate from geranylgeranyl diphosphate (GGPP). It could also react with (14R/S)-14,15-oxidoGGPP to generate 3alpha- and 3beta-hydroxytuberculosinyl diphosphate. In Mycobacterium tuberculosis (strain ATCC 25618 / H37Rv), this protein is Type B diterpene cyclase.